Here is an 84-residue protein sequence, read N- to C-terminus: Toxin To7 (84 aa).

The signal sequence occupies residues 1–20 (MSIFPIVLALLLIGLEETEA). Residues 21 to 83 (LDGYPLSKIN…KMYPGSSPCY (63 aa)) enclose the LCN-type CS-alpha/beta domain. 4 disulfides stabilise this stretch: Cys32/Cys82, Cys36/Cys59, Cys42/Cys64, and Cys46/Cys66.

Expressed by the venom gland.

It localises to the secreted. In terms of biological role, inhibits voltage-gated sodium channels (Nav). The protein is Toxin To7 of Tityus obscurus (Amazonian scorpion).